Consider the following 388-residue polypeptide: Pepsin A-4 (388 aa).

The first 15 residues, 1–15 (MKWLLLLGLVALSEC), serve as a signal peptide directing secretion. The propeptide at 16–62 (IMYKVPLIRKKSLRRTLSERGLLKDFLKKHNLNPARKYFPQWEAPTL) is activation peptide. The Peptidase A1 domain occupies 76–385 (YFGTIGIGTP…DRANNQVGLA (310 aa)). D94 is a catalytic residue. A disulfide bond links C107 and C112. S130 is modified (phosphoserine). An intrachain disulfide couples C268 to C272. D277 is a catalytic residue. C311 and C344 are joined by a disulfide.

It belongs to the peptidase A1 family.

It localises to the secreted. The catalysed reaction is Preferential cleavage: hydrophobic, preferably aromatic, residues in P1 and P1' positions. Cleaves 1-Phe-|-Val-2, 4-Gln-|-His-5, 13-Glu-|-Ala-14, 14-Ala-|-Leu-15, 15-Leu-|-Tyr-16, 16-Tyr-|-Leu-17, 23-Gly-|-Phe-24, 24-Phe-|-Phe-25 and 25-Phe-|-Tyr-26 bonds in the B chain of insulin.. Its function is as follows. Shows particularly broad specificity; although bonds involving phenylalanine and leucine are preferred, many others are also cleaved to some extent. The chain is Pepsin A-4 (PGA4) from Homo sapiens (Human).